The chain runs to 98 residues: NADH-ubiquinone oxidoreductase chain 4L (98 aa).

The next 3 helical transmembrane spans lie at 1–21, 26–46, and 61–81; these read MSPV…GLAF, LLSA…AIAL, and MILL…LVAA.

It belongs to the complex I subunit 4L family.

The protein localises to the mitochondrion membrane. It carries out the reaction a ubiquinone + NADH + 5 H(+)(in) = a ubiquinol + NAD(+) + 4 H(+)(out). In terms of biological role, core subunit of the mitochondrial membrane respiratory chain NADH dehydrogenase (Complex I) which catalyzes electron transfer from NADH through the respiratory chain, using ubiquinone as an electron acceptor. Part of the enzyme membrane arm which is embedded in the lipid bilayer and involved in proton translocation. The chain is NADH-ubiquinone oxidoreductase chain 4L (MT-ND4L) from Squalus acanthias (Spiny dogfish).